The sequence spans 146 residues: Large ribosomal subunit protein uL15 (146 aa).

Positions 1-56 are disordered; it reads MKLHELKAAEGANKASKRVGRGTGSGLGKTSGKGQNGQNSRSGGGVRPGFEGGQMP. Composition is skewed to gly residues over residues 21-35 and 42-52; these read RGTGSGLGKTSGKGQ and SGGGVRPGFEG.

Belongs to the universal ribosomal protein uL15 family. Part of the 50S ribosomal subunit.

Its function is as follows. Binds to the 23S rRNA. The polypeptide is Large ribosomal subunit protein uL15 (Clostridium botulinum (strain Langeland / NCTC 10281 / Type F)).